The following is a 271-amino-acid chain: MTLTRRIIPCLDIKDGRVVKGTNFLGLRDAGDPVELACRYNEQGADEVVFLDITASRENRGMIIDVIQRAADELFLPLTVGGGIRTLDDVQKTLRAGADKVSINTSAVQNPALISEAAQAFGTQCVVVAIDVKRRTSPEPGKTMIPLPDQSSCWYEVVTHGGSQPTGIDAIAWAKEAENRGAGEILLTSMETDGTKEGFDIPITSAISESVGIPVIASGGVGTFDHFYEGFVYGKADAALAASVFHYGEMTIADVKDYLSKKGIAIRPHTQ.

Active-site residues include aspartate 12 and aspartate 131.

This sequence belongs to the HisA/HisF family. As to quaternary structure, heterodimer of HisH and HisF.

It localises to the cytoplasm. It catalyses the reaction 5-[(5-phospho-1-deoxy-D-ribulos-1-ylimino)methylamino]-1-(5-phospho-beta-D-ribosyl)imidazole-4-carboxamide + L-glutamine = D-erythro-1-(imidazol-4-yl)glycerol 3-phosphate + 5-amino-1-(5-phospho-beta-D-ribosyl)imidazole-4-carboxamide + L-glutamate + H(+). Its pathway is amino-acid biosynthesis; L-histidine biosynthesis; L-histidine from 5-phospho-alpha-D-ribose 1-diphosphate: step 5/9. IGPS catalyzes the conversion of PRFAR and glutamine to IGP, AICAR and glutamate. The HisF subunit catalyzes the cyclization activity that produces IGP and AICAR from PRFAR using the ammonia provided by the HisH subunit. The polypeptide is Imidazole glycerol phosphate synthase subunit HisF (Methanospirillum hungatei JF-1 (strain ATCC 27890 / DSM 864 / NBRC 100397 / JF-1)).